A 319-amino-acid polypeptide reads, in one-letter code: Olfactory receptor 8K1 (319 aa).

The Extracellular segment spans residues 1 to 31; sequence MNHVVKHNHTAVTKVTEFILMGITDNPGLQA. N-linked (GlcNAc...) asparagine glycosylation occurs at asparagine 8. The helical transmembrane segment at 32–52 threads the bilayer; it reads PLFGLFLIIYLVTVIGNLGMV. Topologically, residues 53-60 are cytoplasmic; it reads ILTYLDSK. A helical transmembrane segment spans residues 61–81; sequence LHTPMYFFLRHLSITDLGYST. Topologically, residues 82 to 105 are extracellular; it reads VIAPKMLVNFIVHKNTISYNWYAT. The chain crosses the membrane as a helical span at residues 106–126; sequence QLAFFEIFIISELFILSAMAY. At 127 to 145 the chain is on the cytoplasmic side; that stretch reads DRYVAICKPLLYVIIMAEK. The helical transmembrane segment at 146–166 threads the bilayer; sequence VLWVLVIVPYLYSTFVSLFLT. Over 167 to 203 the chain is Extracellular; the sequence is IKLFKLSFCGSNIISYFYCDCIPLMSILCSDTNELEL. Residues 204 to 223 traverse the membrane as a helical segment; the sequence is IILIFSGCNLLFSLSIVLIS. Residues 224-243 lie on the Cytoplasmic side of the membrane; sequence YMFILVAILRMNSRKGRYKA. Residues 244–264 form a helical membrane-spanning segment; sequence FSTCSSHLTVVIMFYGTLLFI. Topologically, residues 265-277 are extracellular; that stretch reads YLQPKSSHTLAID. The helical transmembrane segment at 278-298 threads the bilayer; sequence KMASVFYTLLIPMLNPLIYSL. Residues 299–319 lie on the Cytoplasmic side of the membrane; sequence RNKEVKDALKRTLTNRFKIPI.

Belongs to the G-protein coupled receptor 1 family.

Its subcellular location is the cell membrane. Functionally, odorant receptor. The sequence is that of Olfactory receptor 8K1 (OR8K1) from Homo sapiens (Human).